Here is a 611-residue protein sequence, read N- to C-terminus: MARDQFYGHNNHHHQEQQHQMINQIQGFDETNQNPTDHHHYNHQIFGSNSNMGMMIDFSKQQQIRMTSGSDHHHHHHQTSGGTDQNQLLEDSSSAMRLCNVNNDFPSEVNDERPPQRPSQGLSLSLSSSNPTSISLQSFELRPQQQQQQGYSGNKSTQHQNLQHTQMMMMMMNSHHQNNNNNNHQHHNHHQFQIGSSKYLSPAQELLSEFCSLGVKESDEEVMMMKHKKKQKGKQQEEWDTSHHSNNDQHDQSATTSSKKHVPPLHSLEFMELQKRKAKLLSMLEELKRRYGHYREQMRVAAAAFEAAVGLGGAEIYTALASRAMSRHFRCLKDGLVGQIQATSQALGEREEDNRAVSIAARGETPRLRLLDQALRQQKSYRQMTLVDAHPWRPQRGLPERAVTTLRAWLFEHFLHPYPSDVDKHILARQTGLSRSQVSNWFINARVRLWKPMIEEMYCEETRSEQMEITNPMMIDTKPDPDQLIRVEPESLSSIVTNPTSKSGHNSTHGTMSLGSTFDFSLYGNQAVTYAGEGGPRGDVSLTLGLQRNDGNGGVSLALSPVTAQGGQLFYGRDHIEEGPVQYSASMLDDDQVQNLPYRNLMGAQLLHDIV.

Disordered stretches follow at residues 63 to 87 (QIRM…DQNQ), 101 to 133 (VNND…NPTS), 141 to 160 (LRPQ…TQHQ), and 174 to 195 (SHHQ…FQIG). Residues 118 to 133 (PSQGLSLSLSSSNPTS) show a composition bias toward low complexity. The span at 174-183 (SHHQNNNNNN) shows a compositional bias: low complexity. Positions 197–213 (SKYLSPAQELLSEFCSL) are SR/KY domain. The disordered stretch occupies residues 225–263 (MKHKKKQKGKQQEEWDTSHHSNNDQHDQSATTSSKKHVP). Over residues 234–251 (KQQEEWDTSHHSNNDQHD) the composition is skewed to basic and acidic residues. The tract at residues 269 to 340 (EFMELQKRKA…CLKDGLVGQI (72 aa)) is BELL domain. Residues 275–290 (KRKAKLLSMLEELKRR) carry the Bipartite nuclear localization motif. Residues 391–453 (PWRPQRGLPE…NARVRLWKPM (63 aa)) constitute a DNA-binding region (homeobox).

This sequence belongs to the TALE/BELL homeobox family. May form heterodimeric complexes with TALE/KNOX proteins STM, KNAT1/BP, KNAT2 and KNAT5. Interacts with AG-SEP1 and AG-SEP3 dimers. Interacts with KNATM, isoform KNATM-B. Interacts with BZIP30. In terms of tissue distribution, expressed in both floral and vegetative tissues.

It localises to the nucleus. Functionally, plays a major role in ovule patterning and in determination of integument identity via its interaction with MADS-box factors. Formation of complex with AG-SEP dimers negatively regulates the carpel identity process and favors the maintenance of ovule identity. BEL1-STM complex maintains the indeterminacy of the inflorescence meristem. Required, with SPL, for cytokinin-induced PIN1 expression in ovules. This chain is Homeobox protein BEL1 homolog (BEL1), found in Arabidopsis thaliana (Mouse-ear cress).